Consider the following 546-residue polypeptide: Pre-mRNA-splicing factor 38B (546 aa).

A compositionally biased stretch (polar residues) spans 1-14; the sequence is MANNSPALTGNSQP. Positions 1–40 are disordered; it reads MANNSPALTGNSQPQHQAAAAAAQQQQQCGGGGATKPAVS. Position 2 is an N-acetylalanine (A2). Residue S5 is modified to Phosphoserine. Residues 15–28 are compositionally biased toward low complexity; it reads QHQAAAAAAQQQQQ. Position 227 is an N6-acetyllysine (K227). A disordered region spans residues 229-546; sequence IDQQIKTRPR…KQHKNKDETV (318 aa). Over residues 243-255 the composition is skewed to basic and acidic residues; the sequence is DGKEGAEEIDRHV. Over residues 256-284 the composition is skewed to basic residues; the sequence is ERRRSRSPRRSLSPRRSPRRSRSRSHHRE. Phosphoserine occurs at positions 288, 290, 318, and 320. The span at 291 to 327 shows a compositional bias: basic and acidic residues; it reads FDRELEREKERQRLEREAKEREKERRRSRSIDRGLER. Residues 292–321 adopt a coiled-coil conformation; sequence DRELEREKERQRLEREAKEREKERRRSRSI. Basic residues predominate over residues 328 to 344; the sequence is RRSRSRERHRSRSRSRD. Over residues 345-421 the composition is skewed to basic and acidic residues; the sequence is RKGDRRDRDR…HRDDKRDSKK (77 aa). Basic residues predominate over residues 422–450; that stretch reads EKKHSRSRSRERKHRSRSRSRNAGKRSRS. S448 is subject to Phosphoserine. Positions 451–468 are enriched in basic and acidic residues; that stretch reads RSKEKSSKHKNESKEKSN. A phosphoserine mark is found at S473, S475, and S481. Residues 480–495 are compositionally biased toward basic and acidic residues; that stretch reads DSVEKSKKREHSPSKE. Basic residues predominate over residues 496 to 510; it reads KSRKRSRSKERSHKR. The segment covering 511-546 has biased composition (basic and acidic residues); the sequence is DHSDSKDQSDKHDRRRSQSIEQESQEKQHKNKDETV. Residues S527, S529, and S534 each carry the phosphoserine modification.

The protein belongs to the PRP38 family.

Its subcellular location is the nucleus. Functionally, may be required for pre-mRNA splicing. In Homo sapiens (Human), this protein is Pre-mRNA-splicing factor 38B (PRPF38B).